A 125-amino-acid polypeptide reads, in one-letter code: Holo-[acyl-carrier-protein] synthase (125 aa).

Mg(2+) contacts are provided by Asp8 and Glu57.

Belongs to the P-Pant transferase superfamily. AcpS family. Mg(2+) is required as a cofactor.

The protein resides in the cytoplasm. It catalyses the reaction apo-[ACP] + CoA = holo-[ACP] + adenosine 3',5'-bisphosphate + H(+). Functionally, transfers the 4'-phosphopantetheine moiety from coenzyme A to a Ser of acyl-carrier-protein. This chain is Holo-[acyl-carrier-protein] synthase, found in Azoarcus sp. (strain BH72).